The primary structure comprises 1462 residues: Gag-Pro-Pol polyprotein (1462 aa).

Glycine 2 carries N-myristoyl glycine; by host lipidation. The disordered stretch occupies residues 93 to 143 (QIPSHPAPPPPSSPTHDPPDSDPQIPPPYVEPTAPQVLPVMHPHGVPPTHR). Position 105 is a phosphoserine; by host MAPK1 (serine 105). The PPXY motif signature appears at 118-121 (PPPY). Residues 124–127 (PTAP) carry the PTAP/PSAP motif motif. 2 CCHC-type zinc fingers span residues 355–372 (QPCF…DCAQ) and 378–395 (GPCP…DCPR). The Peptidase A2 domain maps to 476–554 (IEALLDTGAD…NNWAIIGRDA (79 aa)). Aspartate 481 (for protease activity; shared with dimeric partner) is an active-site residue. Positions 614-804 (LEAGHIEPYT…GTIKFLGQII (191 aa)) constitute a Reverse transcriptase domain. Mg(2+) contacts are provided by aspartate 680, aspartate 755, aspartate 756, aspartate 1040, glutamate 1074, aspartate 1096, aspartate 1157, aspartate 1230, and aspartate 1287. The 135-residue stretch at 1031–1165 (INTAPCLFSD…TDALLITPIL (135 aa)) folds into the RNase H type-1 domain. The Integrase catalytic domain maps to 1219-1388 (RGLLPNHIWQ…QPIPETHSLI (170 aa)). A DNA-binding region (integrase-type) is located at residues 1393–1443 (HWYYFKLPGLNSRQWKGPQEALQEAAGAALIPVSANSAQWIPWRLLKQAAC).

In terms of assembly, homodimer; the homodimers are part of the immature particles. Interacts with human TSG101 and NEDD4; these interactions are essential for budding and release of viral particles. Homodimer; further assembles as homohexamers. Requires Mg(2+) as cofactor. Phosphorylation of the matrix protein p19 by MAPK1 seems to play a role in budding. In terms of processing, myristoylated. Myristoylation of the matrix (MA) domain mediates the transport and binding of Gag polyproteins to the host plasma membrane and is required for the assembly of viral particles. Post-translationally, specific enzymatic cleavages by the viral protease yield mature proteins. The polyprotein is cleaved during and after budding, this process is termed maturation. The protease is autoproteolytically processed at its N- and C-termini.

It localises to the virion. The catalysed reaction is Endonucleolytic cleavage to 5'-phosphomonoester.. It catalyses the reaction DNA(n) + a 2'-deoxyribonucleoside 5'-triphosphate = DNA(n+1) + diphosphate. Functionally, the matrix domain targets Gag, Gag-Pro and Gag-Pro-Pol polyproteins to the plasma membrane via a multipartite membrane binding signal, that includes its myristoylated N-terminus. Its function is as follows. Matrix protein. Forms the spherical core of the virus that encapsulates the genomic RNA-nucleocapsid complex. In terms of biological role, binds strongly to viral nucleic acids and promote their aggregation. Also destabilizes the nucleic acids duplexes via highly structured zinc-binding motifs. Functionally, the aspartyl protease mediates proteolytic cleavages of Gag and Gag-Pol polyproteins during or shortly after the release of the virion from the plasma membrane. Cleavages take place as an ordered, step-wise cascade to yield mature proteins. This process is called maturation. Displays maximal activity during the budding process just prior to particle release from the cell (Potential). Cleaves the translation initiation factor eIF4G leading to the inhibition of host cap-dependent translation. Its function is as follows. RT is a multifunctional enzyme that converts the viral RNA genome into dsDNA in the cytoplasm, shortly after virus entry into the cell. This enzyme displays a DNA polymerase activity that can copy either DNA or RNA templates, and a ribonuclease H (RNase H) activity that cleaves the RNA strand of RNA-DNA heteroduplexes in a partially processive 3' to 5'-endonucleasic mode. Conversion of viral genomic RNA into dsDNA requires many steps. A tRNA-Pro binds to the primer-binding site (PBS) situated at the 5'-end of the viral RNA. RT uses the 3' end of the tRNA primer to perform a short round of RNA-dependent minus-strand DNA synthesis. The reading proceeds through the U5 region and ends after the repeated (R) region which is present at both ends of viral RNA. The portion of the RNA-DNA heteroduplex is digested by the RNase H, resulting in a ssDNA product attached to the tRNA primer. This ssDNA/tRNA hybridizes with the identical R region situated at the 3' end of viral RNA. This template exchange, known as minus-strand DNA strong stop transfer, can be either intra- or intermolecular. RT uses the 3' end of this newly synthesized short ssDNA to perform the RNA-dependent minus-strand DNA synthesis of the whole template. RNase H digests the RNA template except for a polypurine tract (PPT) situated at the 5' end of the genome. It is not clear if both polymerase and RNase H activities are simultaneous. RNase H probably can proceed both in a polymerase-dependent (RNA cut into small fragments by the same RT performing DNA synthesis) and a polymerase-independent mode (cleavage of remaining RNA fragments by free RTs). Secondly, RT performs DNA-directed plus-strand DNA synthesis using the PPT that has not been removed by RNase H as primer. PPT and tRNA primers are then removed by RNase H. The 3' and 5' ssDNA PBS regions hybridize to form a circular dsDNA intermediate. Strand displacement synthesis by RT to the PBS and PPT ends produces a blunt ended, linear dsDNA copy of the viral genome that includes long terminal repeats (LTRs) at both ends. Catalyzes viral DNA integration into the host chromosome, by performing a series of DNA cutting and joining reactions. The sequence is that of Gag-Pro-Pol polyprotein (gag-pro-pol) from Homo sapiens (Human).